Consider the following 295-residue polypeptide: Urease accessory protein UreD (295 aa).

It belongs to the UreD family. In terms of assembly, ureD, UreF and UreG form a complex that acts as a GTP-hydrolysis-dependent molecular chaperone, activating the urease apoprotein by helping to assemble the nickel containing metallocenter of UreC. The UreE protein probably delivers the nickel.

It is found in the cytoplasm. In terms of biological role, required for maturation of urease via the functional incorporation of the urease nickel metallocenter. The polypeptide is Urease accessory protein UreD (Ralstonia nicotianae (strain ATCC BAA-1114 / GMI1000) (Ralstonia solanacearum)).